The following is a 276-amino-acid chain: DnaJ homolog subfamily C member 27-B (276 aa).

Residues 23 to 30, 71 to 75, and 137 to 140 each bind GTP; these read GNAEVGKS, DMAGH, and NKID. The J domain maps to 220–276; the sequence is DSWDMLGVKPGATRDEVNKAYRKLAVLLHPDKCVAPGSEDAFKAVVNARTALLKNIK.

This sequence belongs to the small GTPase superfamily. Rab family.

The protein localises to the nucleus. GTPase possibly involved in regulation of the MEK/ERK pathway. This chain is DnaJ homolog subfamily C member 27-B (dnajc27-b), found in Xenopus laevis (African clawed frog).